A 95-amino-acid chain; its full sequence is MNIRPLHDRVIVERQESESKSAGGIVLTGSAAEKSTRGIILAVGNGRILENGSVQPLDVKVGDSVIFAEGNIKAEKIDGKEVLIMSEYNILAIVE.

Belongs to the GroES chaperonin family. As to quaternary structure, heptamer of 7 subunits arranged in a ring. Interacts with the chaperonin GroEL.

The protein localises to the cytoplasm. Functionally, together with the chaperonin GroEL, plays an essential role in assisting protein folding. The GroEL-GroES system forms a nano-cage that allows encapsulation of the non-native substrate proteins and provides a physical environment optimized to promote and accelerate protein folding. GroES binds to the apical surface of the GroEL ring, thereby capping the opening of the GroEL channel. The polypeptide is Co-chaperonin GroES (Aliivibrio salmonicida (strain LFI1238) (Vibrio salmonicida (strain LFI1238))).